We begin with the raw amino-acid sequence, 438 residues long: Arginine deiminase-like protein (438 aa).

It belongs to the arginine deiminase family.

The protein is Arginine deiminase-like protein of Mycoplasma pneumoniae (strain ATCC 29342 / M129 / Subtype 1) (Mycoplasmoides pneumoniae).